We begin with the raw amino-acid sequence, 238 residues long: Probable transcriptional regulatory protein VV2_1184 (238 aa).

Belongs to the TACO1 family.

It localises to the cytoplasm. The protein is Probable transcriptional regulatory protein VV2_1184 of Vibrio vulnificus (strain CMCP6).